The sequence spans 230 residues: Sugar fermentation stimulation protein homolog (230 aa).

The protein belongs to the SfsA family.

The chain is Sugar fermentation stimulation protein homolog from Pyrococcus furiosus (strain ATCC 43587 / DSM 3638 / JCM 8422 / Vc1).